We begin with the raw amino-acid sequence, 506 residues long: Plant intracellular Ras-group-related LRR protein 1 (506 aa).

The tract at residues 24 to 48 (TAKSSSSSDVEPPPSKSDPSSSSNH) is disordered. The stretch at 143–193 (KSILKLNELHESYEKLLKEAEERLVRIYESAEKNAAAVAEEEAAEVEVNEE) forms a coiled coil. LRR repeat units lie at residues 203 to 225 (ENPLDRVDLSGRKLKLLPEAFGK), 226 to 249 (IQGLLVLNLYNNQLQAIPDSIAGL), 251 to 272 (NLLELDVSTNFLETLPDSIGLL), 273 to 295 (SKLKILNVSCNKLTTLPDSICHC), 297 to 319 (SLVVLDASYNNLTYLPTNIGFEL), 320 to 342 (VKLEKLLIHLNKIRSLPTSIGEM), 344 to 364 (SLRYLDAHFNELNGLPNSFGL), 365 to 389 (LTNLEYLNLSSNFSDLQDLPASFGD), 390 to 412 (LISLQELDLSNNQIHSLPDAFGT), and 414 to 436 (VNLTKLNLDQNPLVVPPDEVVKQ). The short motif at 437-449 (GVDAVKMYMGKRW) is the GVYW element.

This sequence belongs to the SHOC2 family. Widely expressed.

Its function is as follows. Leucine-rich repeat protein that likely mediates protein interactions, possibly in the context of signal transduction. PIRL1 acts redundantly with PIRL9 in the differentiation of microspores into pollen. This Arabidopsis thaliana (Mouse-ear cress) protein is Plant intracellular Ras-group-related LRR protein 1 (PIRL1).